Reading from the N-terminus, the 186-residue chain is uncharacterized protein (186 aa).

In terms of domain architecture, Cupin type-2 spans leucine 89–tyrosine 164. Glycine 117 to serine 124 is a binding site for ATP.

This is an uncharacterized protein from Bacillus subtilis (strain 168).